The following is a 160-amino-acid chain: Small ribosomal subunit protein uS7 (160 aa).

Belongs to the universal ribosomal protein uS7 family. Part of the 30S ribosomal subunit. Contacts proteins S9 and S11.

One of the primary rRNA binding proteins, it binds directly to 16S rRNA where it nucleates assembly of the head domain of the 30S subunit. Is located at the subunit interface close to the decoding center, probably blocks exit of the E-site tRNA. The polypeptide is Small ribosomal subunit protein uS7 (Hydrogenobaculum sp. (strain Y04AAS1)).